The sequence spans 292 residues: Small ribosomal subunit protein uS5 (292 aa).

The segment at 1–56 is disordered; it reads MADDAGAAGGPGGPGGPGMGGRGGFRGGFGSGIRGRGRGRGRGRGRGRGARGGKAE. Ala-2 is modified (N-acetylalanine). Residues 7–34 are compositionally biased toward gly residues; sequence AAGGPGGPGGPGMGGRGGFRGGFGSGIR. Basic residues predominate over residues 35–51; that stretch reads GRGRGRGRGRGRGRGAR. Glycyl lysine isopeptide (Lys-Gly) (interchain with G-Cter in ubiquitin) cross-links involve residues Lys-54 and Lys-58. Residues 102–165 enclose the S5 DRBM domain; that stretch reads LKDEVLKIMP…ILAKLSIVPV (64 aa). Thr-251 carries the phosphothreonine modification. An N6-acetyllysine modification is found at Lys-262. Position 263 is a phosphoserine (Ser-263). Thr-269 carries the post-translational modification Phosphothreonine. An N6-acetyllysine; alternate modification is found at Lys-274. A Glycyl lysine isopeptide (Lys-Gly) (interchain with G-Cter in SUMO1); alternate cross-link involves residue Lys-274. Lys-274 is covalently cross-linked (Glycyl lysine isopeptide (Lys-Gly) (interchain with G-Cter in SUMO2); alternate). Lys-274 participates in a covalent cross-link: Glycyl lysine isopeptide (Lys-Gly) (interchain with G-Cter in ubiquitin); alternate. Phosphoserine is present on Ser-280.

The protein belongs to the universal ribosomal protein uS5 family. As to quaternary structure, component of the small ribosomal subunit. Interacts with zinc finger protein ZNF277 (via zinc-finger domains); the interaction is direct; the interaction is extra-ribosomal. Interaction with ZNF277 competes with the binding of RPS2 to protein arginine methyltransferase PRMT3. Citrullinated by PADI4 in the Arg/Gly-rich region. In terms of processing, asymmetric arginine dimethylation by PRMT3 occurs at multiple sites in the Arg/Gly-rich region. Post-translationally, monoubiquitinated at Lys-54 and Lys-58 by RNF10 when a ribosome has stalled during translation, leading to its degradation by the proteasome. Deubiquitinated at Lys-54 and Lys-58 by USP10, preventing degradation by the proteasome and promoting 40S ribosome subunit recycling following ribosome dissociation.

It is found in the cytoplasm. Its subcellular location is the nucleus. The protein localises to the nucleolus. In terms of biological role, component of the ribosome, a large ribonucleoprotein complex responsible for the synthesis of proteins in the cell. The small ribosomal subunit (SSU) binds messenger RNAs (mRNAs) and translates the encoded message by selecting cognate aminoacyl-transfer RNA (tRNA) molecules. The large subunit (LSU) contains the ribosomal catalytic site termed the peptidyl transferase center (PTC), which catalyzes the formation of peptide bonds, thereby polymerizing the amino acids delivered by tRNAs into a polypeptide chain. The nascent polypeptides leave the ribosome through a tunnel in the LSU and interact with protein factors that function in enzymatic processing, targeting, and the membrane insertion of nascent chains at the exit of the ribosomal tunnel. Plays a role in the assembly and function of the 40S ribosomal subunit. This chain is Small ribosomal subunit protein uS5 (RPS2), found in Oryctolagus cuniculus (Rabbit).